The following is a 556-amino-acid chain: Arginine--tRNA ligase (556 aa).

A 'HIGH' region motif is present at residues 130–140 (ANPTGPIHLGG).

The protein belongs to the class-I aminoacyl-tRNA synthetase family. Monomer.

It localises to the cytoplasm. It catalyses the reaction tRNA(Arg) + L-arginine + ATP = L-arginyl-tRNA(Arg) + AMP + diphosphate. This Corynebacterium jeikeium (strain K411) protein is Arginine--tRNA ligase.